A 401-amino-acid chain; its full sequence is UDP-N-acetylglucosamine--N-acetylmuramyl-(pentapeptide) pyrophosphoryl-undecaprenol N-acetylglucosamine transferase (401 aa).

The interval 1–24 is disordered; sequence MTRISVPAGQERNDGGISVPAGQE. UDP-N-acetyl-alpha-D-glucosamine-binding positions include 39–41, Asn-157, Arg-194, Ser-228, and Gln-324; that span reads TAG.

It belongs to the glycosyltransferase 28 family. MurG subfamily.

It localises to the cell membrane. The enzyme catalyses di-trans,octa-cis-undecaprenyl diphospho-N-acetyl-alpha-D-muramoyl-L-alanyl-D-glutamyl-meso-2,6-diaminopimeloyl-D-alanyl-D-alanine + UDP-N-acetyl-alpha-D-glucosamine = di-trans,octa-cis-undecaprenyl diphospho-[N-acetyl-alpha-D-glucosaminyl-(1-&gt;4)]-N-acetyl-alpha-D-muramoyl-L-alanyl-D-glutamyl-meso-2,6-diaminopimeloyl-D-alanyl-D-alanine + UDP + H(+). Its pathway is cell wall biogenesis; peptidoglycan biosynthesis. In terms of biological role, cell wall formation. Catalyzes the transfer of a GlcNAc subunit on undecaprenyl-pyrophosphoryl-MurNAc-pentapeptide (lipid intermediate I) to form undecaprenyl-pyrophosphoryl-MurNAc-(pentapeptide)GlcNAc (lipid intermediate II). This Mycolicibacterium vanbaalenii (strain DSM 7251 / JCM 13017 / BCRC 16820 / KCTC 9966 / NRRL B-24157 / PYR-1) (Mycobacterium vanbaalenii) protein is UDP-N-acetylglucosamine--N-acetylmuramyl-(pentapeptide) pyrophosphoryl-undecaprenol N-acetylglucosamine transferase.